A 214-amino-acid polypeptide reads, in one-letter code: MTTLADLRINYSRASLDEADAAPDPFAQFDRWFKEALAAKLPEPNTMTLATVGADGRPSARIVLIKGVDERGFVFFTNYESRKGHDLAVHPQAALLFYWIELERQVRIEGRIEKTSAEESDRYFASRPLGSRIGAWASEQSAVIDSRATLEAREKAVSERYGDNPPRPPHWGGYRLVPDSIEFWQGRPSRLHDRLLYTRDAAAASGWTISRLSP.

Substrate is bound by residues 8-11 and Lys66; that span reads RINY. FMN is bound by residues 61–66, 76–77, Arg82, Lys83, and Gln105; these read RIVLIK and FT. Substrate is bound by residues Tyr123, Arg127, and Ser131. Residues 140-141 and Trp184 each bind FMN; that span reads QS. Substrate is bound at residue 190–192; that stretch reads RLH. Arg194 lines the FMN pocket.

It belongs to the pyridoxamine 5'-phosphate oxidase family. In terms of assembly, homodimer. FMN serves as cofactor.

It carries out the reaction pyridoxamine 5'-phosphate + O2 + H2O = pyridoxal 5'-phosphate + H2O2 + NH4(+). The catalysed reaction is pyridoxine 5'-phosphate + O2 = pyridoxal 5'-phosphate + H2O2. It participates in cofactor metabolism; pyridoxal 5'-phosphate salvage; pyridoxal 5'-phosphate from pyridoxamine 5'-phosphate: step 1/1. Its pathway is cofactor metabolism; pyridoxal 5'-phosphate salvage; pyridoxal 5'-phosphate from pyridoxine 5'-phosphate: step 1/1. Its function is as follows. Catalyzes the oxidation of either pyridoxine 5'-phosphate (PNP) or pyridoxamine 5'-phosphate (PMP) into pyridoxal 5'-phosphate (PLP). The polypeptide is Pyridoxine/pyridoxamine 5'-phosphate oxidase (Burkholderia cenocepacia (strain HI2424)).